The chain runs to 179 residues: Large ribosomal subunit protein uL5 (179 aa).

This sequence belongs to the universal ribosomal protein uL5 family. As to quaternary structure, part of the 50S ribosomal subunit; part of the 5S rRNA/L5/L18/L25 subcomplex. Contacts the 5S rRNA and the P site tRNA. Forms a bridge to the 30S subunit in the 70S ribosome.

Its function is as follows. This is one of the proteins that bind and probably mediate the attachment of the 5S RNA into the large ribosomal subunit, where it forms part of the central protuberance. In the 70S ribosome it contacts protein S13 of the 30S subunit (bridge B1b), connecting the 2 subunits; this bridge is implicated in subunit movement. Contacts the P site tRNA; the 5S rRNA and some of its associated proteins might help stabilize positioning of ribosome-bound tRNAs. This Paramagnetospirillum magneticum (strain ATCC 700264 / AMB-1) (Magnetospirillum magneticum) protein is Large ribosomal subunit protein uL5.